The chain runs to 800 residues: Receptor like protein 26 (800 aa).

The first 19 residues, 1-19 (MRLHFCSLLLLYCIVFVSS), serve as a signal peptide directing secretion. Over 20–733 (FLTTDALACL…EEEDEVIEWK (714 aa)) the chain is Extracellular. Residues Asn49, Asn61, Asn83, Asn96, Asn101, and Asn113 are each glycosylated (N-linked (GlcNAc...) asparagine). LRR repeat units follow at residues 89–113 (LHQLRYLNLSHNNFTSSSLPSEFSN), 115–138 (TRLEVLSLASSSFTGQVPSSISNL), 139–161 (ILLTHLNLSHNELTGSFPPVRNL), 162–185 (TKLSFLDLSYNQFSGAIPFDLLPT), 187–212 (PFLSYLDLKKNHLTGSIDVPNSSSSS), 214–235 (LVRLSLGFNQFEGKIIEPISKL), 236–259 (INLNHLELASLNISHPIDLRVFAP), 260–281 (LKSLLVFDIRQNRLLPASLSSD), 285–307 (PLSLISLILIQCDIIEFPNIFKT), 308–332 (LQNLEHIDISNNLIKGKVPEWFWKL), 334–357 (RLSIANLVNNSLTGFEGSSEVLLN), and 358–381 (SSVQLLDFAYNSMTGAFPTPPLGS). Residues Asn145 and Asn160 are each glycosylated (N-linked (GlcNAc...) asparagine). N-linked (GlcNAc...) asparagine glycosylation occurs at Asn207. Asn247 carries N-linked (GlcNAc...) asparagine glycosylation. Residues Asn342 and Asn357 are each glycosylated (N-linked (GlcNAc...) asparagine). The LRR 13; degenerate repeat unit spans residues 382–401 (IYLSAWNNSFTGNIPLSICN). 2 N-linked (GlcNAc...) asparagine glycosylation sites follow: Asn388 and Asn401. LRR repeat units lie at residues 402-423 (RSSLIVLDLSYNKFTGPIPQCL), 424-446 (SNLKVVNLRKNSLEGSIPDEFHS), 448-471 (AKTQTLDVGYNRLTGKLPKSLLNC), 472-494 (SSLRFLSVDNNRIEDTFPFWLKA), 495-519 (LPNLHVLTLRSNRFFGHLSPPDRGP), 522-546 (FPELRILELSDNSFTGSLPPNFFVN), 591-615 (LTFYSTIDFSGNKLEGQIPESIGLL), 616-639 (KELIALNLSNNAFTGHIPMSLANV), 640-663 (TELESLDLSRNQLSGNIPRELGSL), and 665-688 (FLAYISVAHNQLKGEIPQGPQFSG). N-linked (GlcNAc...) asparagine glycosylation is present at Asn470. N-linked (GlcNAc...) asparagine glycans are attached at residues Asn622 and Asn638. A helical transmembrane segment spans residues 734–754 (AVFFGYWPGLLLGLVMAHVIA). Over 755 to 800 (SFKPKWFVKILGPAKGKQVDPVRLFMNLDSRWDSFNNKDTVEEEVI) the chain is Cytoplasmic.

It belongs to the RLP family.

It is found in the cell membrane. The chain is Receptor like protein 26 from Arabidopsis thaliana (Mouse-ear cress).